A 212-amino-acid chain; its full sequence is Large ribosomal subunit protein uL3 (212 aa).

The disordered stretch occupies residues 119 to 147 (YQGNIKRWGQSRGPETHGSRYHRIPGSMG).

This sequence belongs to the universal ribosomal protein uL3 family. As to quaternary structure, part of the 50S ribosomal subunit. Forms a cluster with proteins L14 and L19.

In terms of biological role, one of the primary rRNA binding proteins, it binds directly near the 3'-end of the 23S rRNA, where it nucleates assembly of the 50S subunit. The protein is Large ribosomal subunit protein uL3 of Lactobacillus acidophilus (strain ATCC 700396 / NCK56 / N2 / NCFM).